The primary structure comprises 337 residues: o-succinylbenzoate synthase (337 aa).

Lysine 142 serves as the catalytic Proton donor. Mg(2+)-binding residues include aspartate 170, glutamate 199, and aspartate 222. Lysine 248 (proton acceptor) is an active-site residue.

This sequence belongs to the mandelate racemase/muconate lactonizing enzyme family. MenC type 1 subfamily. Requires a divalent metal cation as cofactor.

It carries out the reaction (1R,6R)-6-hydroxy-2-succinyl-cyclohexa-2,4-diene-1-carboxylate = 2-succinylbenzoate + H2O. It functions in the pathway quinol/quinone metabolism; 1,4-dihydroxy-2-naphthoate biosynthesis; 1,4-dihydroxy-2-naphthoate from chorismate: step 4/7. The protein operates within quinol/quinone metabolism; menaquinone biosynthesis. Functionally, converts 2-succinyl-6-hydroxy-2,4-cyclohexadiene-1-carboxylate (SHCHC) to 2-succinylbenzoate (OSB). The sequence is that of o-succinylbenzoate synthase from Pasteurella multocida (strain Pm70).